The chain runs to 75 residues: Conotoxin Vt15.1 (75 aa).

The signal sequence occupies residues 1 to 19 (MMPVILPLLLSLAIRGGDG). Positions 20–43 (QAIQGDRDLIAKLFKRYQEHGLSV) are excised as a propeptide. Residue Trp-73 is modified to Tryptophan amide.

The protein belongs to the conotoxin V superfamily. Contains 4 disulfide bonds. Expressed by the venom duct.

It is found in the secreted. This is Conotoxin Vt15.1 from Conus planorbis (Planorbis cone).